The primary structure comprises 921 residues: Short transient receptor potential channel 3 (921 aa).

The interval 1–73 (MSTKVRKCKE…PPFSHGPDLS (73 aa)) is disordered. Residues 1–459 (MSTKVRKCKE…KILRSPFMKF (459 aa)) lie on the Cytoplasmic side of the membrane. A compositionally biased stretch (acidic residues) spans 19-31 (PEEEEDEGEDEGA). 4 ANK repeats span residues 111–140 (AEEE…TLNV), 146–175 (MGQN…LARI), 177–203 (DALL…FAAS), and 232–261 (PDIT…RIER). E158 provides a ligand contact to Ca(2+). A helical transmembrane segment spans residues 460-477 (VAHAASFIIFLGLLVFNA). The Extracellular segment spans residues 478 to 508 (SDRFEGITTLPNITVTDYPKQIFRVKTTQFT). N-linked (GlcNAc...) asparagine glycosylation occurs at N489. Residues 509-527 (WTEMLIMVWVLGMMWSECK) traverse the membrane as a helical segment. E525, E528, and N543 together coordinate Ca(2+). The Cytoplasmic portion of the chain corresponds to 528–540 (ELWLEGPREYILQ). A helical transmembrane segment spans residues 541 to 562 (LWNVLDFGMLSIFIAAFTARFL). Topologically, residues 563–606 (AFLQATKAQQYVDSYVQESDLSEVTLPPEIQYFTYARDKWLPSD) are extracellular. A helical membrane pass occupies residues 607–630 (PQIISEGLYAIAVVLSFSRIAYIL). Over 631 to 649 (PANESFGPLQISLGRTVKD) the chain is Cytoplasmic. The stretch at 634–663 (ESFGPLQISLGRTVKDIFKFMVLFIMVFFA) is one ANK 5 repeat. The chain crosses the membrane as a helical span at residues 650 to 673 (IFKFMVLFIMVFFAFMIGMFILYS). Over 674–713 (YYLGAKVNAAFTTVEESFKTLFWSIFGLSEVTSVVLKYDH) the chain is Extracellular. A helical transmembrane segment spans residues 714-739 (KFIENIGYVLYGIYNVTMVVVLLNML). The Cytoplasmic portion of the chain corresponds to 740–921 (IAMINSSYQE…KLNPSMLRCE (182 aa)). The interval 850–870 (QIMKRLIKRYVLKAQVDKEND) is binds to IP3R3. Positions 871, 874, 876, and 883 each coordinate Ca(2+).

The protein belongs to the transient receptor (TC 1.A.4) family. STrpC subfamily. TRPC3 sub-subfamily. Homotetramer. Interacts with ITPR1. Interacts with ITPR3. Interacts with MX1. Interacts with RNF24. Interacts with JPH2; the interaction is involved in maintaining Ca(2+) homeostasis in skeletal muscle and is mediated by JPH2 'Ser-165' phosphorylation. As to quaternary structure, interacts with isoform short of TRPC1. Expressed predominantly in brain and at much lower levels in ovary, colon, small intestine, lung, prostate, placenta and testis.

It is found in the cell membrane. The enzyme catalyses Ca(2+)(in) = Ca(2+)(out). With respect to regulation, activated by diacylglycerol (DAG) in a membrane-delimited fashion, independently of protein kinase C. Activated by inositol 1,4,5-triphosphate receptors (ITPR) with bound IP3. May be activated by internal calcium store depletion. Inhibited by intracellular Ca(2+). Forms a receptor-activated non-selective calcium permeant cation channel. Functionally, forms a receptor-activated non-selective calcium permeant cation channel. May be operated by a phosphatidylinositol second messenger system activated by receptor tyrosine kinases or G-protein coupled receptors. The sequence is that of Short transient receptor potential channel 3 (TRPC3) from Homo sapiens (Human).